Reading from the N-terminus, the 348-residue chain is Cyclin-dependent kinase inhibitor 1C (348 aa).

At Arg109 the chain carries Omega-N-methylarginine. The tract at residues 115–348 (VAVIPRSGPP…VEQTPRKRLR (234 aa)) is disordered. Composition is skewed to acidic residues over residues 207-220 (QGEESGAEPGDELG) and 227-274 (QGEE…QDEN). A compositionally biased stretch (basic and acidic residues) spans 275–284 (QEQRGQELKD). The Nuclear localization signal signature appears at 309 to 312 (KRKR).

This sequence belongs to the CDI family. As to quaternary structure, interacts with PCNA. In terms of tissue distribution, expressed in the heart, brain, lung, skeletal muscle, kidney, pancreas and testis. High levels are seen in the placenta while low levels are seen in the liver.

It is found in the nucleus. Potent tight-binding inhibitor of several G1 cyclin/CDK complexes (cyclin E-CDK2, cyclin D2-CDK4, and cyclin A-CDK2) and, to lesser extent, of the mitotic cyclin B-CDC2. Negative regulator of cell proliferation. May play a role in maintenance of the non-proliferative state throughout life. In Mus musculus (Mouse), this protein is Cyclin-dependent kinase inhibitor 1C (Cdkn1c).